Here is a 207-residue protein sequence, read N- to C-terminus: Uracil phosphoribosyltransferase (207 aa).

5-phospho-alpha-D-ribose 1-diphosphate-binding positions include R77, R102, and 129–137; that span reads DPMLATGGS. Uracil is bound by residues I192 and 197–199; that span reads GDA. Residue D198 coordinates 5-phospho-alpha-D-ribose 1-diphosphate.

It belongs to the UPRTase family. Mg(2+) serves as cofactor.

The enzyme catalyses UMP + diphosphate = 5-phospho-alpha-D-ribose 1-diphosphate + uracil. It functions in the pathway pyrimidine metabolism; UMP biosynthesis via salvage pathway; UMP from uracil: step 1/1. Its activity is regulated as follows. Allosterically activated by GTP. Its function is as follows. Catalyzes the conversion of uracil and 5-phospho-alpha-D-ribose 1-diphosphate (PRPP) to UMP and diphosphate. The sequence is that of Uracil phosphoribosyltransferase from Nocardia farcinica (strain IFM 10152).